The primary structure comprises 359 residues: Peptide chain release factor 1 (359 aa).

Q233 bears the N5-methylglutamine mark.

This sequence belongs to the prokaryotic/mitochondrial release factor family. Post-translationally, methylated by PrmC. Methylation increases the termination efficiency of RF1.

The protein resides in the cytoplasm. Its function is as follows. Peptide chain release factor 1 directs the termination of translation in response to the peptide chain termination codons UAG and UAA. The polypeptide is Peptide chain release factor 1 (Orientia tsutsugamushi (strain Boryong) (Rickettsia tsutsugamushi)).